A 250-amino-acid chain; its full sequence is Coproheme decarboxylase (250 aa).

Residues Arg131, 145 to 149 (YPMNK), His172, and Gln185 each bind Fe-coproporphyrin III. The active site involves Tyr145.

The protein belongs to the ChdC family. Type 1 subfamily. Fe-coproporphyrin III is required as a cofactor.

The catalysed reaction is Fe-coproporphyrin III + 2 H2O2 + 2 H(+) = heme b + 2 CO2 + 4 H2O. It catalyses the reaction Fe-coproporphyrin III + H2O2 + H(+) = harderoheme III + CO2 + 2 H2O. It carries out the reaction harderoheme III + H2O2 + H(+) = heme b + CO2 + 2 H2O. It participates in porphyrin-containing compound metabolism; protoheme biosynthesis. Its function is as follows. Involved in coproporphyrin-dependent heme b biosynthesis. Catalyzes the decarboxylation of Fe-coproporphyrin III (coproheme) to heme b (protoheme IX), the last step of the pathway. The reaction occurs in a stepwise manner with a three-propionate intermediate. The sequence is that of Coproheme decarboxylase from Staphylococcus aureus (strain bovine RF122 / ET3-1).